We begin with the raw amino-acid sequence, 199 residues long: Chaperone protein TorD (199 aa).

It belongs to the TorD/DmsD family. TorD subfamily.

Its subcellular location is the cytoplasm. Involved in the biogenesis of TorA. Acts on TorA before the insertion of the molybdenum cofactor and, as a result, probably favors a conformation of the apoenzyme that is competent for acquiring the cofactor. The chain is Chaperone protein TorD from Actinobacillus pleuropneumoniae serotype 7 (strain AP76).